The sequence spans 336 residues: CST complex subunit STN1 (336 aa).

Residues 49–126 constitute a DNA-binding region (OB); the sequence is VDILGTVVCV…EVVASIFYKV (78 aa). Winged helix-turn-helix (wHTH) stretches follow at residues 162–263 and 264–336; these read QSQE…YVTD and HDKE…YTAF.

The protein belongs to the CTC1 family. Component of the CST complex.

It localises to the nucleus. The protein resides in the chromosome. Its subcellular location is the telomere. Functionally, component of the CST complex proposed to act as a specialized replication factor promoting DNA replication under conditions of replication stress or natural replication barriers such as the telomere duplex. The CST complex binds single-stranded DNA with high affinity in a sequence-independent manner, while isolated subunits bind DNA with low affinity by themselves. Initially the CST complex has been proposed to protect telomeres from DNA degradation. However, the CST complex has been shown to be involved in several aspects of telomere replication. The chain is CST complex subunit STN1 from Aquarana catesbeiana (American bullfrog).